A 205-amino-acid polypeptide reads, in one-letter code: Large ribosomal subunit protein uL4 (205 aa).

A disordered region spans residues 43–96 (GKRQGTSKVKNRSAVRGGGKKPWRQKGTGRARQGSIRSPQWRGGGTVFGPTPRS). The segment covering 51 to 71 (VKNRSAVRGGGKKPWRQKGTG) has biased composition (basic residues).

It belongs to the universal ribosomal protein uL4 family. Part of the 50S ribosomal subunit.

Functionally, one of the primary rRNA binding proteins, this protein initially binds near the 5'-end of the 23S rRNA. It is important during the early stages of 50S assembly. It makes multiple contacts with different domains of the 23S rRNA in the assembled 50S subunit and ribosome. Its function is as follows. Forms part of the polypeptide exit tunnel. The protein is Large ribosomal subunit protein uL4 of Lactobacillus helveticus (strain DPC 4571).